Here is a 267-residue protein sequence, read N- to C-terminus: Glutamate 5-kinase (267 aa).

Residue Lys-14 coordinates ATP. Substrate-binding residues include Ser-54, Asp-141, and Asn-157. Residues Ser-177–Asp-178 and Thr-219–Lys-225 each bind ATP.

The protein belongs to the glutamate 5-kinase family.

It is found in the cytoplasm. The enzyme catalyses L-glutamate + ATP = L-glutamyl 5-phosphate + ADP. Its pathway is amino-acid biosynthesis; L-proline biosynthesis; L-glutamate 5-semialdehyde from L-glutamate: step 1/2. Its function is as follows. Catalyzes the transfer of a phosphate group to glutamate to form L-glutamate 5-phosphate. The protein is Glutamate 5-kinase of Streptococcus agalactiae serotype Ia (strain ATCC 27591 / A909 / CDC SS700).